We begin with the raw amino-acid sequence, 485 residues long: WD repeat-containing protein 13 (485 aa).

Phosphoserine is present on residues Ser-70, Ser-74, and Ser-79. Arg-114 carries the asymmetric dimethylarginine; alternate modification. Arg-114 bears the Omega-N-methylarginine; alternate mark. WD repeat units lie at residues 170–210 (HVDE…PTVL), 215–254 (GHTR…CIRE), 302–341 (KLTG…GKLT), 406–446 (HPVR…KAAV), and 451–484 (GHSA…RREQ).

It localises to the nucleus. The sequence is that of WD repeat-containing protein 13 (WDR13) from Pongo abelii (Sumatran orangutan).